The primary structure comprises 388 residues: Alanine racemase 1 (388 aa).

K40 (proton acceptor; specific for D-alanine) is an active-site residue. K40 is modified (N6-(pyridoxal phosphate)lysine). A substrate-binding site is contributed by R138. The Proton acceptor; specific for L-alanine role is filled by Y268. M316 is a binding site for substrate.

Belongs to the alanine racemase family. Requires pyridoxal 5'-phosphate as cofactor.

It catalyses the reaction L-alanine = D-alanine. It participates in amino-acid biosynthesis; D-alanine biosynthesis; D-alanine from L-alanine: step 1/1. In terms of biological role, catalyzes the interconversion of L-alanine and D-alanine. May also act on other amino acids. This is Alanine racemase 1 (alr1) from Caldanaerobacter subterraneus subsp. tengcongensis (strain DSM 15242 / JCM 11007 / NBRC 100824 / MB4) (Thermoanaerobacter tengcongensis).